The chain runs to 336 residues: Adenosine deaminase (336 aa).

H15 and H17 together coordinate Zn(2+). Substrate is bound by residues H17, D19, and G172. Zn(2+) is bound at residue H199. The Proton donor role is filled by E202. D279 provides a ligand contact to Zn(2+).

The protein belongs to the metallo-dependent hydrolases superfamily. Adenosine and AMP deaminases family. Adenosine deaminase subfamily. Zn(2+) serves as cofactor.

The enzyme catalyses adenosine + H2O + H(+) = inosine + NH4(+). It catalyses the reaction 2'-deoxyadenosine + H2O + H(+) = 2'-deoxyinosine + NH4(+). Functionally, catalyzes the hydrolytic deamination of adenosine and 2-deoxyadenosine. In Streptococcus thermophilus (strain ATCC BAA-250 / LMG 18311), this protein is Adenosine deaminase.